The chain runs to 481 residues: Proline--tRNA ligase (481 aa).

The protein belongs to the class-II aminoacyl-tRNA synthetase family. ProS type 3 subfamily. In terms of assembly, homodimer.

The protein localises to the cytoplasm. The catalysed reaction is tRNA(Pro) + L-proline + ATP = L-prolyl-tRNA(Pro) + AMP + diphosphate. Catalyzes the attachment of proline to tRNA(Pro) in a two-step reaction: proline is first activated by ATP to form Pro-AMP and then transferred to the acceptor end of tRNA(Pro). In Chlorobium limicola (strain DSM 245 / NBRC 103803 / 6330), this protein is Proline--tRNA ligase.